The following is a 467-amino-acid chain: 6-phosphogluconate dehydrogenase, decarboxylating (467 aa).

NADP(+) contacts are provided by residues 9–14 (GLGVMG), 32–34 (NYT), 73–75 (VTA), and N101. Residues N101 and 127–129 (SGG) contribute to the substrate site. Catalysis depends on K181, which acts as the Proton acceptor. 184–185 (HN) lines the substrate pocket. The active-site Proton donor is E188. Residues Y189, K259, R286, and H451 each coordinate substrate.

It belongs to the 6-phosphogluconate dehydrogenase family. In terms of assembly, homodimer.

The enzyme catalyses 6-phospho-D-gluconate + NADP(+) = D-ribulose 5-phosphate + CO2 + NADPH. The protein operates within carbohydrate degradation; pentose phosphate pathway; D-ribulose 5-phosphate from D-glucose 6-phosphate (oxidative stage): step 3/3. In terms of biological role, catalyzes the oxidative decarboxylation of 6-phosphogluconate to ribulose 5-phosphate and CO(2), with concomitant reduction of NADP to NADPH. In Bacillus licheniformis, this protein is 6-phosphogluconate dehydrogenase, decarboxylating (gntZ).